Reading from the N-terminus, the 288-residue chain is Acetyl-coenzyme A carboxylase carboxyl transferase subunit beta (288 aa).

A CoA carboxyltransferase N-terminal domain is found at 34–288; that stretch reads LFSKCPACKV…RLLRMHGGVR (255 aa). The Zn(2+) site is built by C38, C41, C56, and C59. Residues 38 to 59 form a C4-type zinc finger; it reads CPACKVILYKNDLGLEKTCQHC.

This sequence belongs to the AccD/PCCB family. As to quaternary structure, acetyl-CoA carboxylase is a heterohexamer composed of biotin carboxyl carrier protein (AccB), biotin carboxylase (AccC) and two subunits each of ACCase subunit alpha (AccA) and ACCase subunit beta (AccD). Zn(2+) serves as cofactor.

Its subcellular location is the cytoplasm. It catalyses the reaction N(6)-carboxybiotinyl-L-lysyl-[protein] + acetyl-CoA = N(6)-biotinyl-L-lysyl-[protein] + malonyl-CoA. Its pathway is lipid metabolism; malonyl-CoA biosynthesis; malonyl-CoA from acetyl-CoA: step 1/1. In terms of biological role, component of the acetyl coenzyme A carboxylase (ACC) complex. Biotin carboxylase (BC) catalyzes the carboxylation of biotin on its carrier protein (BCCP) and then the CO(2) group is transferred by the transcarboxylase to acetyl-CoA to form malonyl-CoA. This chain is Acetyl-coenzyme A carboxylase carboxyl transferase subunit beta, found in Streptococcus suis (strain 98HAH33).